Consider the following 207-residue polypeptide: Guanylate kinase (207 aa).

The Guanylate kinase-like domain occupies 4–184; it reads GTLYIVSAPS…AQMDFRSIIR (181 aa). 11 to 18 contacts ATP; that stretch reads APSGAGKS.

The protein belongs to the guanylate kinase family.

The protein resides in the cytoplasm. The catalysed reaction is GMP + ATP = GDP + ADP. In terms of biological role, essential for recycling GMP and indirectly, cGMP. The chain is Guanylate kinase from Aliivibrio fischeri (strain ATCC 700601 / ES114) (Vibrio fischeri).